A 120-amino-acid chain; its full sequence is NAD(P)H-quinone oxidoreductase subunit 3 (120 aa).

A run of 3 helical transmembrane segments spans residues 6-26 (GYDA…LALV), 64-84 (MFAL…PWAV), and 89-109 (LGLL…VALA).

It belongs to the complex I subunit 3 family. NDH-1 can be composed of about 15 different subunits; different subcomplexes with different compositions have been identified which probably have different functions.

The protein resides in the cellular thylakoid membrane. It catalyses the reaction a plastoquinone + NADH + (n+1) H(+)(in) = a plastoquinol + NAD(+) + n H(+)(out). The enzyme catalyses a plastoquinone + NADPH + (n+1) H(+)(in) = a plastoquinol + NADP(+) + n H(+)(out). NDH-1 shuttles electrons from an unknown electron donor, via FMN and iron-sulfur (Fe-S) centers, to quinones in the respiratory and/or the photosynthetic chain. The immediate electron acceptor for the enzyme in this species is believed to be plastoquinone. Couples the redox reaction to proton translocation, and thus conserves the redox energy in a proton gradient. Cyanobacterial NDH-1 also plays a role in inorganic carbon-concentration. In Prochlorococcus marinus (strain MIT 9211), this protein is NAD(P)H-quinone oxidoreductase subunit 3.